The sequence spans 606 residues: Melanoma-associated antigen D2 (606 aa).

The segment at 1–204 is disordered; the sequence is MSDTSESGAG…QASGTTGGRR (204 aa). Ser2 carries the post-translational modification N-acetylserine. Ser5 is subject to Phosphoserine. Residues 24–37 are compositionally biased toward polar residues; the sequence is SSMMQTLLTVTQNV. Thr72 carries the phosphothreonine modification. Over residues 81–93 the composition is skewed to polar residues; that stretch reads TQASSTTQLTDTQ. A compositionally biased stretch (basic and acidic residues) spans 122–131; sequence ETKKVSHVAD. Residues 142-164 show a composition bias toward low complexity; that stretch reads EAAPSQAPADEPEPESAAAQSQE. Position 157 is a phosphoserine (Ser157). Over residues 171 to 181 the composition is skewed to basic residues; the sequence is KVKAKKARKVK. Phosphoserine is present on residues Ser190, Ser191, Ser194, Ser197, Ser244, and Ser247. Basic residues predominate over residues 248-260; the sequence is PKARRGKARRRAA. Residues 248-275 form a disordered region; sequence PKARRGKARRRAAKLQSSQEPEAPPPRD. Phosphoserine occurs at positions 264 and 265. The region spanning 279 to 478 is the MAGE domain; the sequence is LQGRANDLVK…KEWAAQYREA (200 aa). The tract at residues 534–563 is disordered; the sequence is GAEAKAKAQESGSASTGASTSTNNSASASA.

In terms of assembly, interacts with GNAS. May interact with DNAJB1. Widely expressed. In the developing and adult kidney, expressed in the thick ascending limb of the loop of Henle and the distal convoluted tubules outside the loop.

In terms of biological role, regulates the expression, localization to the plasma membrane and function of the sodium chloride cotransporters SLC12A1 and SLC12A3, two key components of salt reabsorption in the distal renal tubule. In Homo sapiens (Human), this protein is Melanoma-associated antigen D2 (MAGED2).